Here is a 58-residue protein sequence, read N- to C-terminus: Large ribosomal subunit protein eL24 (58 aa).

Residues Cys-6, Cys-9, Cys-32, and Cys-36 each coordinate Zn(2+). The segment at 6-36 (CSFCGYDIEPGTGKMYVRRDGRVFYFCSGKC) adopts a C4-type zinc-finger fold.

The protein belongs to the eukaryotic ribosomal protein eL24 family. In terms of assembly, part of the 50S ribosomal subunit. Forms a cluster with proteins L3 and L14. Requires Zn(2+) as cofactor.

In terms of biological role, binds to the 23S rRNA. This chain is Large ribosomal subunit protein eL24, found in Archaeoglobus fulgidus (strain ATCC 49558 / DSM 4304 / JCM 9628 / NBRC 100126 / VC-16).